We begin with the raw amino-acid sequence, 780 residues long: Kojibiose phosphorylase (780 aa).

Substrate is bound at residue 354–355 (WD). The Proton donor role is filled by E496. Residue 608–609 (KQ) participates in substrate binding.

The protein belongs to the glycosyl hydrolase 65 family.

The enzyme catalyses kojibiose + phosphate = beta-D-glucose 1-phosphate + D-glucose. In terms of biological role, catalyzes the reversible phosphorolysis of kojibiose into beta-D-glucose 1-phosphate (Glc1P) and D-glucose. In the reverse direction, uses Glc1P as acceptor to produce alpha-1,2-glucans up to a degree of polymerization of 6. This is Kojibiose phosphorylase from Halothermothrix orenii (strain H 168 / OCM 544 / DSM 9562).